Reading from the N-terminus, the 142-residue chain is Peptide methionine sulfoxide reductase MsrB (142 aa).

Positions 2 to 125 constitute a MsrB domain; sequence LKKDKSELTD…NSAAIQFIPY (124 aa). C114 (nucleophile) is an active-site residue.

This sequence belongs to the MsrB Met sulfoxide reductase family.

The enzyme catalyses L-methionyl-[protein] + [thioredoxin]-disulfide + H2O = L-methionyl-(R)-S-oxide-[protein] + [thioredoxin]-dithiol. The sequence is that of Peptide methionine sulfoxide reductase MsrB from Staphylococcus aureus (strain USA300).